An 802-amino-acid chain; its full sequence is ATP-dependent zinc metalloprotease FTSH 7, chloroplastic (802 aa).

The N-terminal 55 residues, 1–55, are a transit peptide targeting the chloroplast; sequence MTTTFEFLQPRIHGFATCCSSNSLLYSKASRFFNDRCRVYRQNPNRFVSNSITLP. Positions 87–117 are disordered; that stretch reads CQEDDQNESSSEEEESSQSTPAKSERKREKK. Positions 88 to 102 are enriched in acidic residues; that stretch reads QEDDQNESSSEEEES. Transmembrane regions (helical) follow at residues 134–154 and 268–288; these read IIQAQGIGVLLLQLSVVMFVM and GGFFNSALIALFYIAVLAGLI. 365-372 contacts ATP; the sequence is GLPGTGKT. Position 590 (H590) interacts with Zn(2+). E591 is an active-site residue. Residues H594 and D673 each contribute to the Zn(2+) site.

It in the N-terminal section; belongs to the AAA ATPase family. This sequence in the C-terminal section; belongs to the peptidase M41 family. It depends on Zn(2+) as a cofactor.

It localises to the plastid. It is found in the chloroplast thylakoid membrane. Functionally, probable ATP-dependent zinc metallopeptidase. The protein is ATP-dependent zinc metalloprotease FTSH 7, chloroplastic (FTSH7) of Arabidopsis thaliana (Mouse-ear cress).